The following is a 706-amino-acid chain: Putative pentatricopeptide repeat-containing protein At3g47840 (706 aa).

16 PPR repeats span residues 39-69, 70-104, 107-141, 142-172, 173-203, 208-242, 243-273, 274-308, 309-343, 344-374, 375-409, 410-444, 445-475, 476-510, 511-541, and 547-577; these read VKFD…MPHG, DIVS…DHAV, DTSV…SLLS, SVYV…MPFR, NAVT…MSRS, DTYT…GFVT, TLCV…MSER, DVVS…QVPP, NEQT…GLND, SLSV…MRCR, DIIS…GTKP, TDFA…GLEQ, NSTV…TDRD, DIVS…GFRP, DSVT…MQET, and AKEH…MSWK. A type E motif region spans residues 582 to 657; that stretch reads VWTTLLIACK…EPGWSSIKIK (76 aa). Residues 658–688 are type E(+) motif; sequence DCVSAFVSGDRFHPQSEDIYNILELAVSGAE.

The protein belongs to the PPR family. PCMP-E subfamily.

This is Putative pentatricopeptide repeat-containing protein At3g47840 (PCMP-E43) from Arabidopsis thaliana (Mouse-ear cress).